We begin with the raw amino-acid sequence, 288 residues long: MTAGDPMRLHPGHALSSFTEHLRALAPELLGPNRFAALDGATGSSGGTGAKDIAPHGTTIVAVSYRGGVLIAGDRRATQGNLLASRDMDKVYITDTFSAAGIAGTAGMAVELVRLFAVELEHYEKIEGVPLTFDGKANKLSKMVRDNLPAALQGLAVVPVLVGYDERAGDPDRAGRIVSYDVVGGRSEERFGYTAVGSGSMFAKTSLKKLYAKGIDQARALRIALESLYDASDDDTATGGPDLLRGIYPTAVVIDAEGALEVPESRLEEIARGIVADRTAAQEGSAGA.

A propeptide spans 1-57 (MTAGDPMRLHPGHALSSFTEHLRALAPELLGPNRFAALDGATGSSGGTGAKDIAPHG) (removed in mature form; by autocatalysis). Catalysis depends on T58, which acts as the Nucleophile.

This sequence belongs to the peptidase T1B family. In terms of assembly, the 20S proteasome core is composed of 14 alpha and 14 beta subunits that assemble into four stacked heptameric rings, resulting in a barrel-shaped structure. The two inner rings, each composed of seven catalytic beta subunits, are sandwiched by two outer rings, each composed of seven alpha subunits. The catalytic chamber with the active sites is on the inside of the barrel. Has a gated structure, the ends of the cylinder being occluded by the N-termini of the alpha-subunits. Is capped by the proteasome-associated ATPase, ARC.

The protein resides in the cytoplasm. It catalyses the reaction Cleavage of peptide bonds with very broad specificity.. It functions in the pathway protein degradation; proteasomal Pup-dependent pathway. With respect to regulation, the formation of the proteasomal ATPase ARC-20S proteasome complex, likely via the docking of the C-termini of ARC into the intersubunit pockets in the alpha-rings, may trigger opening of the gate for substrate entry. Interconversion between the open-gate and close-gate conformations leads to a dynamic regulation of the 20S proteasome proteolysis activity. Its function is as follows. Component of the proteasome core, a large protease complex with broad specificity involved in protein degradation. The sequence is that of Proteasome subunit beta from Nocardia farcinica (strain IFM 10152).